The following is a 172-amino-acid chain: Large ribosomal subunit protein uL16 (172 aa).

It belongs to the universal ribosomal protein uL16 family.

This Methanocella arvoryzae (strain DSM 22066 / NBRC 105507 / MRE50) protein is Large ribosomal subunit protein uL16.